Reading from the N-terminus, the 135-residue chain is Small ribosomal subunit protein uS8 (135 aa).

The protein belongs to the universal ribosomal protein uS8 family. As to quaternary structure, part of the 30S ribosomal subunit. Contacts proteins S5 and S12.

Functionally, one of the primary rRNA binding proteins, it binds directly to 16S rRNA central domain where it helps coordinate assembly of the platform of the 30S subunit. The polypeptide is Small ribosomal subunit protein uS8 (Corynebacterium urealyticum (strain ATCC 43042 / DSM 7109)).